The sequence spans 162 residues: Cyanate hydratase (162 aa).

Catalysis depends on residues arginine 90, glutamate 93, and serine 116.

This sequence belongs to the cyanase family.

The catalysed reaction is cyanate + hydrogencarbonate + 3 H(+) = NH4(+) + 2 CO2. In terms of biological role, catalyzes the reaction of cyanate with bicarbonate to produce ammonia and carbon dioxide. In Populus trichocarpa (Western balsam poplar), this protein is Cyanate hydratase.